A 393-amino-acid polypeptide reads, in one-letter code: NAD(P)H-quinone oxidoreductase subunit H, chloroplastic (393 aa).

It belongs to the complex I 49 kDa subunit family. NDH is composed of at least 16 different subunits, 5 of which are encoded in the nucleus.

It localises to the plastid. The protein resides in the chloroplast thylakoid membrane. The catalysed reaction is a plastoquinone + NADH + (n+1) H(+)(in) = a plastoquinol + NAD(+) + n H(+)(out). It catalyses the reaction a plastoquinone + NADPH + (n+1) H(+)(in) = a plastoquinol + NADP(+) + n H(+)(out). In terms of biological role, NDH shuttles electrons from NAD(P)H:plastoquinone, via FMN and iron-sulfur (Fe-S) centers, to quinones in the photosynthetic chain and possibly in a chloroplast respiratory chain. The immediate electron acceptor for the enzyme in this species is believed to be plastoquinone. Couples the redox reaction to proton translocation, and thus conserves the redox energy in a proton gradient. The protein is NAD(P)H-quinone oxidoreductase subunit H, chloroplastic of Solanum lycopersicum (Tomato).